The sequence spans 226 residues: UPF0758 protein Spy49_0870 (226 aa).

Residues 103–225 (SVLTSVQVAE…YYSFREKSTL (123 aa)) enclose the MPN domain. Residues histidine 174, histidine 176, and aspartate 187 each coordinate Zn(2+). Positions 174–187 (HNHPSGNIEPSSND) match the JAMM motif motif.

The protein belongs to the UPF0758 family.

The sequence is that of UPF0758 protein Spy49_0870 from Streptococcus pyogenes serotype M49 (strain NZ131).